The primary structure comprises 185 residues: Transcription factor FapR (185 aa).

The protein belongs to the FapR family.

Transcriptional factor involved in regulation of membrane lipid biosynthesis by repressing genes involved in fatty acid and phospholipid metabolism. The chain is Transcription factor FapR from Staphylococcus aureus (strain Mu3 / ATCC 700698).